Consider the following 566-residue polypeptide: MGSAAMDTKKKKEVSSPGGSSGKKNPSLKRRSLRVHIPDLSSFAMPLLDGDVENSEKHSSRKVDSPFSSGSPSRGLFSRGPQPRPSSPVSAPVRPKTSPGSPKTVFPFSYQESPPRSPRRMSFSGIFRSSSKESSPNSNPSTSPGGIRFFSRSRKTSSVSSSPSTPTQVTKQHPFPLESYKQEPERPESRIYASSSPPDTGQRFCLAFQSPARPPLASPTYHAPLRTAVLAAAPGPAEAGMLEKLEFQEEEDSESGVYMRFMRSHKCYDIVPTSSKLVVFDTTLQVKKAFFALVANGVRAAPLWESKKQSFVGMLTITDFINILHRYYKSPMVQIYELEEHKIETWRELYLQETFKPLVNISPDASLFDAVYSLIKNKIHRLPVIDPISGNALYILTHKRILKFLQLFMSDMPKPAFMKQNLDELGIGTYHNIAFIHPDTPIIKALNIFVERRISALPVVDESGKVVDIYSKFDVINLAAEKTYNNLDITVTQALQHRSQYFEGVVKCSKLETLETIVDRIVRAEVHRLVVVNEADSIVGIISLSDILQALILTPAGAKQKETETE.

Residues 1 to 198 (MGSAAMDTKK…SRIYASSSPP (198 aa)) are disordered. A compositionally biased stretch (low complexity) spans 15 to 25 (SSPGGSSGKKN). The span at 54–64 (NSEKHSSRKVD) shows a compositional bias: basic and acidic residues. Phosphoserine is present on residues serine 65, serine 71, serine 73, serine 90, serine 138, serine 143, serine 158, serine 161, and serine 162. 2 stretches are compositionally biased toward low complexity: residues 132-144 (KESS…STSP) and 156-172 (TSSV…VTKQ). Threonine 165 bears the Phosphothreonine mark. Residues 180 to 189 (YKQEPERPES) show a composition bias toward basic and acidic residues. Phosphoserine is present on serine 196. CBS domains follow at residues 272–332 (PTSS…KSPM), 354–412 (TFKP…MSDM), and 427–489 (IGTY…NLDI). ADP is bound by residues arginine 299, 314 to 319 (MLTITD), valine 359, 380 to 381 (HR), and lysine 399. AMP is bound by residues arginine 299, 314–319 (MLTITD), valine 359, histidine 380, 380–381 (HR), lysine 399, threonine 429, alanine 434, 455–456 (SA), 471–474 (SKFD), arginine 498, histidine 527, 527–528 (HR), and 543–546 (SLSD). ATP is bound by residues arginine 299, 314-319 (MLTITD), valine 359, 380-381 (HR), arginine 381, and lysine 399. The AMPK pseudosubstrate signature appears at 367–388 (LFDAVYSLIKNKIHRLPVIDPI). Residues 471-474 (SKFD), arginine 498, and 527-528 (HR) each bind ADP. ATP is bound by residues 471–474 (SKFD), arginine 498, and 527–528 (HR). One can recognise a CBS 4 domain in the interval 501 to 559 (YFEGVVKCSKLETLETIVDRIVRAEVHRLVVVNEADSIVGIISLSDILQALILTPAGAK).

It belongs to the 5'-AMP-activated protein kinase gamma subunit family. As to quaternary structure, AMPK is a heterotrimer of an alpha catalytic subunit (PRKAA1 or PRKAA2), a beta (PRKAB1 or PRKAB2) and a gamma non-catalytic subunits (PRKAG1, PRKAG2 or PRKAG3). Interacts with FNIP1 and FNIP2. Phosphorylated by ULK1; leading to negatively regulate AMPK activity and suggesting the existence of a regulatory feedback loop between ULK1 and AMPK. In terms of processing, glycosylated; O-GlcNAcylated by OGT, promoting the AMP-activated protein kinase (AMPK) activity.

Its function is as follows. AMP/ATP-binding subunit of AMP-activated protein kinase (AMPK), an energy sensor protein kinase that plays a key role in regulating cellular energy metabolism. In response to reduction of intracellular ATP levels, AMPK activates energy-producing pathways and inhibits energy-consuming processes: inhibits protein, carbohydrate and lipid biosynthesis, as well as cell growth and proliferation. AMPK acts via direct phosphorylation of metabolic enzymes, and by longer-term effects via phosphorylation of transcription regulators. Also acts as a regulator of cellular polarity by remodeling the actin cytoskeleton; probably by indirectly activating myosin. Gamma non-catalytic subunit mediates binding to AMP, ADP and ATP, leading to activate or inhibit AMPK: AMP-binding results in allosteric activation of alpha catalytic subunit (PRKAA1 or PRKAA2) both by inducing phosphorylation and preventing dephosphorylation of catalytic subunits. ADP also stimulates phosphorylation, without stimulating already phosphorylated catalytic subunit. ATP promotes dephosphorylation of catalytic subunit, rendering the AMPK enzyme inactive. The polypeptide is 5'-AMP-activated protein kinase subunit gamma-2 (Prkag2) (Mus musculus (Mouse)).